The chain runs to 287 residues: Putative esterase/lipase HI_0193 (287 aa).

The region spanning 47–273 (PVLIFIHGLF…SGHWVHAEKP (227 aa)) is the AB hydrolase-1 domain. Residues Ser-119 and His-266 contribute to the active site.

Belongs to the DmpD/TodF/XylF esterase family.

The chain is Putative esterase/lipase HI_0193 from Haemophilus influenzae (strain ATCC 51907 / DSM 11121 / KW20 / Rd).